The following is a 224-amino-acid chain: Protein DEHYDRATION-INDUCED 19 homolog 4 (224 aa).

Residues 1 to 12 (MDSNWINCPSVF) show a composition bias toward polar residues. The interval 1–23 (MDSNWINCPSVFSSSSSSSRRCQ) is disordered. Residues 13-23 (SSSSSSSRRCQ) are compositionally biased toward low complexity. Phosphothreonine is present on Thr-117.

This sequence belongs to the Di19 family. Post-translationally, phosphorylated in vitro by CPK3 or CPK11. As to expression, expressed in seedlings, roots, leaves, stems, flowers and siliques.

Its subcellular location is the cytoplasm. It localises to the perinuclear region. The polypeptide is Protein DEHYDRATION-INDUCED 19 homolog 4 (DI19-4) (Arabidopsis thaliana (Mouse-ear cress)).